A 505-amino-acid chain; its full sequence is uncharacterized protein (505 aa).

An N-terminal signal peptide occupies residues 1–22 (MAILKSALVGFICFLHFFIVNA). Residues N25 and N114 are each glycosylated (N-linked (GlcNAc...) asparagine). 5 helical membrane-spanning segments follow: residues 181-201 (LFLN…WSFI), 216-236 (ISGV…YFYF), 266-286 (FLLL…GSLL), 291-311 (ILAG…FISP), and 318-338 (VILF…LWIV). Residue N342 is glycosylated (N-linked (GlcNAc...) asparagine). A run of 2 helical transmembrane segments spans residues 365 to 385 (IVIC…AILI) and 400 to 420 (LLWF…MLTI). The N-linked (GlcNAc...) asparagine glycan is linked to N454.

This sequence belongs to the LU7TM family.

It is found in the membrane. This is an uncharacterized protein from Schizosaccharomyces pombe (strain 972 / ATCC 24843) (Fission yeast).